Reading from the N-terminus, the 123-residue chain is MARLIGVDLPRDKRLEVALTYIYGIGRTRATETLKATGISGDLRVHELTDDQLVALRDHIEANYHVEGDLRREVAADIRRKIEIGTYQGRRHRSGLPVRGQRTRTNARTRKGKRKAVAKKKAK.

Residues 89 to 123 (GRRHRSGLPVRGQRTRTNARTRKGKRKAVAKKKAK) form a disordered region. A compositionally biased stretch (basic residues) spans 101–123 (QRTRTNARTRKGKRKAVAKKKAK).

Belongs to the universal ribosomal protein uS13 family. As to quaternary structure, part of the 30S ribosomal subunit. Forms a loose heterodimer with protein S19. Forms two bridges to the 50S subunit in the 70S ribosome.

Functionally, located at the top of the head of the 30S subunit, it contacts several helices of the 16S rRNA. In the 70S ribosome it contacts the 23S rRNA (bridge B1a) and protein L5 of the 50S subunit (bridge B1b), connecting the 2 subunits; these bridges are implicated in subunit movement. Contacts the tRNAs in the A and P-sites. The polypeptide is Small ribosomal subunit protein uS13 (Cutibacterium acnes (strain DSM 16379 / KPA171202) (Propionibacterium acnes)).